The following is a 192-amino-acid chain: Imidazoleglycerol-phosphate dehydratase (192 aa).

Belongs to the imidazoleglycerol-phosphate dehydratase family.

Its subcellular location is the cytoplasm. The enzyme catalyses D-erythro-1-(imidazol-4-yl)glycerol 3-phosphate = 3-(imidazol-4-yl)-2-oxopropyl phosphate + H2O. Its pathway is amino-acid biosynthesis; L-histidine biosynthesis; L-histidine from 5-phospho-alpha-D-ribose 1-diphosphate: step 6/9. The chain is Imidazoleglycerol-phosphate dehydratase from Caldivirga maquilingensis (strain ATCC 700844 / DSM 13496 / JCM 10307 / IC-167).